The chain runs to 116 residues: Iron-sulfur cluster insertion protein ErpA (116 aa).

Iron-sulfur cluster contacts are provided by Cys44, Cys108, and Cys110.

The protein belongs to the HesB/IscA family. In terms of assembly, homodimer. The cofactor is iron-sulfur cluster.

Required for insertion of 4Fe-4S clusters for at least IspG. This is Iron-sulfur cluster insertion protein ErpA from Shewanella sp. (strain ANA-3).